A 218-amino-acid polypeptide reads, in one-letter code: Cytochrome b6 (218 aa).

Residues 35-55 (IFYCLGGITLVCFLIQFATGF) form a helical membrane-spanning segment. A heme c-binding site is contributed by Cys-38. Positions 89 and 103 each coordinate heme b. A run of 3 helical transmembrane segments spans residues 93–113 (ASMM…TGGF), 119–139 (LTWV…VTGY), and 189–209 (LHTF…FLMI). Positions 190 and 205 each coordinate heme b.

Belongs to the cytochrome b family. PetB subfamily. In terms of assembly, the 4 large subunits of the cytochrome b6-f complex are cytochrome b6, subunit IV (17 kDa polypeptide, PetD), cytochrome f and the Rieske protein, while the 4 small subunits are PetG, PetL, PetM and PetN. The complex functions as a dimer. Heme b is required as a cofactor. Requires heme c as cofactor.

Its subcellular location is the cellular thylakoid membrane. Its function is as follows. Component of the cytochrome b6-f complex, which mediates electron transfer between photosystem II (PSII) and photosystem I (PSI), cyclic electron flow around PSI, and state transitions. The protein is Cytochrome b6 of Prochlorococcus marinus subsp. pastoris (strain CCMP1986 / NIES-2087 / MED4).